Here is a 561-residue protein sequence, read N- to C-terminus: Formate--tetrahydrofolate ligase (561 aa).

An ATP-binding site is contributed by 66–73 (TPAGEGKT).

Belongs to the formate--tetrahydrofolate ligase family.

It carries out the reaction (6S)-5,6,7,8-tetrahydrofolate + formate + ATP = (6R)-10-formyltetrahydrofolate + ADP + phosphate. It functions in the pathway one-carbon metabolism; tetrahydrofolate interconversion. This is Formate--tetrahydrofolate ligase from Methylibium petroleiphilum (strain ATCC BAA-1232 / LMG 22953 / PM1).